The following is a 196-amino-acid chain: MKIGVLGLQGAVREHVRAIEACGAEAVIVKKPEQLEGLDGLVLPGGESTTMRRLIDRYGLMEPLKQFAAAGKPMFGTCAGLILLAKRIVGYDEPHLGLMDITVERNSFGRQRESFEAELSIKGVGDGFVGVFIRAPHIVEAGDGVDVLATYNDRIVAARQGQFLGCSFHPELTDDHRLMQYFLNMVKEAKMASSLK.

An L-glutamine-binding site is contributed by 46–48 (GES). Cys78 serves as the catalytic Nucleophile. Residues Arg105 and 133–134 (IR) each bind L-glutamine. Residues His169 and Glu171 each act as charge relay system in the active site.

This sequence belongs to the glutaminase PdxT/SNO family. In terms of assembly, in the presence of PdxS, forms a dodecamer of heterodimers. Only shows activity in the heterodimer.

It carries out the reaction aldehydo-D-ribose 5-phosphate + D-glyceraldehyde 3-phosphate + L-glutamine = pyridoxal 5'-phosphate + L-glutamate + phosphate + 3 H2O + H(+). The enzyme catalyses L-glutamine + H2O = L-glutamate + NH4(+). The protein operates within cofactor biosynthesis; pyridoxal 5'-phosphate biosynthesis. Its function is as follows. Catalyzes the hydrolysis of glutamine to glutamate and ammonia as part of the biosynthesis of pyridoxal 5'-phosphate. The resulting ammonia molecule is channeled to the active site of PdxS. The polypeptide is Pyridoxal 5'-phosphate synthase subunit PdxT (Geobacillus kaustophilus (strain HTA426)).